Here is a 1401-residue protein sequence, read N- to C-terminus: DNA-directed RNA polymerase subunit beta' (1401 aa).

C70, C72, C85, and C88 together coordinate Zn(2+). 3 residues coordinate Mg(2+): D460, D462, and D464. Residues C808, C882, C889, and C892 each contribute to the Zn(2+) site.

Belongs to the RNA polymerase beta' chain family. The RNAP catalytic core consists of 2 alpha, 1 beta, 1 beta' and 1 omega subunit. When a sigma factor is associated with the core the holoenzyme is formed, which can initiate transcription. It depends on Mg(2+) as a cofactor. Zn(2+) is required as a cofactor.

The enzyme catalyses RNA(n) + a ribonucleoside 5'-triphosphate = RNA(n+1) + diphosphate. Its function is as follows. DNA-dependent RNA polymerase catalyzes the transcription of DNA into RNA using the four ribonucleoside triphosphates as substrates. The polypeptide is DNA-directed RNA polymerase subunit beta' (Legionella pneumophila subsp. pneumophila (strain Philadelphia 1 / ATCC 33152 / DSM 7513)).